We begin with the raw amino-acid sequence, 392 residues long: 1-deoxy-D-xylulose 5-phosphate reductoisomerase (392 aa).

The NADPH site is built by Thr-10, Gly-11, Ser-12, Ile-13, Arg-37, Gln-38, and Asn-124. Lys-125 is a 1-deoxy-D-xylulose 5-phosphate binding site. Glu-126 is a binding site for NADPH. Asp-150 provides a ligand contact to Mn(2+). Residues Ser-151, Glu-152, Ser-179, and His-202 each coordinate 1-deoxy-D-xylulose 5-phosphate. Glu-152 is a binding site for Mn(2+). Gly-208 contacts NADPH. Positions 215, 220, 221, and 224 each coordinate 1-deoxy-D-xylulose 5-phosphate. Residue Glu-224 coordinates Mn(2+).

The protein belongs to the DXR family. The cofactor is Mg(2+). It depends on Mn(2+) as a cofactor.

The catalysed reaction is 2-C-methyl-D-erythritol 4-phosphate + NADP(+) = 1-deoxy-D-xylulose 5-phosphate + NADPH + H(+). It participates in isoprenoid biosynthesis; isopentenyl diphosphate biosynthesis via DXP pathway; isopentenyl diphosphate from 1-deoxy-D-xylulose 5-phosphate: step 1/6. Catalyzes the NADPH-dependent rearrangement and reduction of 1-deoxy-D-xylulose-5-phosphate (DXP) to 2-C-methyl-D-erythritol 4-phosphate (MEP). The polypeptide is 1-deoxy-D-xylulose 5-phosphate reductoisomerase (Cupriavidus metallidurans (strain ATCC 43123 / DSM 2839 / NBRC 102507 / CH34) (Ralstonia metallidurans)).